Reading from the N-terminus, the 102-residue chain is Protein translation factor SUI1 homolog (102 aa).

This sequence belongs to the SUI1 family.

This is Protein translation factor SUI1 homolog from Methanosarcina acetivorans (strain ATCC 35395 / DSM 2834 / JCM 12185 / C2A).